The following is a 124-amino-acid chain: UPF0212 protein Hlac_0869 (124 aa).

It belongs to the UPF0212 family.

This chain is UPF0212 protein Hlac_0869, found in Halorubrum lacusprofundi (strain ATCC 49239 / DSM 5036 / JCM 8891 / ACAM 34).